A 468-amino-acid polypeptide reads, in one-letter code: POC1 centriolar protein homolog B (468 aa).

WD repeat units lie at residues 16–55 (GHKD…RAYK), 58–97 (GHKE…ESTV), 100–139 (AHTA…FLFS), 142–181 (QHTN…CINT), 184–223 (DYKG…LLQH), 226–265 (VHNA…LIYT), and 268–307 (GHQG…YSVK). Residues 420–459 (NTLEQIVDQLNVLTQTVSILEHRLTLTEDKLKECLENQQK) are a coiled coil.

Belongs to the WD repeat POC1 family. As to quaternary structure, interacts with pat. In terms of tissue distribution, highly expressed in ovary and, at low levels, in testis.

The protein resides in the cytoplasm. Its subcellular location is the cytoskeleton. The protein localises to the microtubule organizing center. It is found in the centrosome. It localises to the centriole. Plays an important role in centriole assembly and/or stability and ciliogenesis. Involved in early steps of centriole duplication, as well as in the later steps of centriole length control. The polypeptide is POC1 centriolar protein homolog B (poc1b) (Xenopus laevis (African clawed frog)).